The chain runs to 36 residues: Photosystem I reaction center subunit VIII (36 aa).

A helical transmembrane segment spans residues 6–28; it reads LPSIFVPXVGLVFPAIAMASXFL.

The protein belongs to the PsaI family.

It is found in the plastid. It localises to the chloroplast thylakoid membrane. Functionally, may help in the organization of the PsaL subunit. The protein is Photosystem I reaction center subunit VIII of Acorus gramineus (Dwarf sweet flag).